A 174-amino-acid polypeptide reads, in one-letter code: Ribosome maturation factor RimM (174 aa).

The PRC barrel domain occupies 97-171 (SDGEYYWCDL…RMTVSLPEGL (75 aa)).

Belongs to the RimM family. In terms of assembly, binds ribosomal protein uS19.

It is found in the cytoplasm. Its function is as follows. An accessory protein needed during the final step in the assembly of 30S ribosomal subunit, possibly for assembly of the head region. Essential for efficient processing of 16S rRNA. May be needed both before and after RbfA during the maturation of 16S rRNA. It has affinity for free ribosomal 30S subunits but not for 70S ribosomes. The sequence is that of Ribosome maturation factor RimM from Geotalea daltonii (strain DSM 22248 / JCM 15807 / FRC-32) (Geobacter daltonii).